The chain runs to 298 residues: ATP phosphoribosyltransferase (298 aa).

This sequence belongs to the ATP phosphoribosyltransferase family. Long subfamily. The cofactor is Mg(2+).

Its subcellular location is the cytoplasm. It catalyses the reaction 1-(5-phospho-beta-D-ribosyl)-ATP + diphosphate = 5-phospho-alpha-D-ribose 1-diphosphate + ATP. It participates in amino-acid biosynthesis; L-histidine biosynthesis; L-histidine from 5-phospho-alpha-D-ribose 1-diphosphate: step 1/9. With respect to regulation, feedback inhibited by histidine. Its function is as follows. Catalyzes the condensation of ATP and 5-phosphoribose 1-diphosphate to form N'-(5'-phosphoribosyl)-ATP (PR-ATP). Has a crucial role in the pathway because the rate of histidine biosynthesis seems to be controlled primarily by regulation of HisG enzymatic activity. The sequence is that of ATP phosphoribosyltransferase from Tolumonas auensis (strain DSM 9187 / NBRC 110442 / TA 4).